Here is a 123-residue protein sequence, read N- to C-terminus: WAP four-disulfide core domain protein 5 (123 aa).

The N-terminal stretch at 1-24 (MRIQSLLLLGALLAVGSQLPAVFG) is a signal peptide. 2 WAP domains span residues 27–73 (KGEK…CVPR) and 74–121 (VSVK…RDPA). 8 disulfides stabilise this stretch: Cys-34/Cys-62, Cys-41/Cys-66, Cys-49/Cys-61, Cys-55/Cys-70, Cys-81/Cys-109, Cys-88/Cys-113, Cys-96/Cys-108, and Cys-102/Cys-117.

It localises to the secreted. Its function is as follows. Putative acid-stable proteinase inhibitor. In Papio anubis (Olive baboon), this protein is WAP four-disulfide core domain protein 5 (WFDC5).